We begin with the raw amino-acid sequence, 267 residues long: WUSCHEL-related homeobox 8 (267 aa).

A DNA-binding region (homeobox; WUS-type) is located at residues 88–152 (TARQRWTPTP…NRRARSKRKQ (65 aa)). The disordered stretch occupies residues 148–195 (SKRKQAALPNNNAESEAEADEESPTDKKPKSDRPLHQNIAMRDHNSER). The span at 171 to 195 (PTDKKPKSDRPLHQNIAMRDHNSER) shows a compositional bias: basic and acidic residues.

It belongs to the WUS homeobox family.

The protein localises to the nucleus. Functionally, transcription factor which may be involved in developmental processes. In Oryza sativa subsp. japonica (Rice), this protein is WUSCHEL-related homeobox 8 (WOX8).